Here is a 51-residue protein sequence, read N- to C-terminus: Micropeptide inhibiting actin cytoskeleton (51 aa).

The segment at 1 to 22 is disordered; it reads MERAGVPGFSPRRSSVEAKMQS.

Interacts with aquaporin AQP2.

Its function is as follows. Reduces filamentous actin fibers by interacting with aquaporin AQP2 which leads to inhibition of the expression of SEPTIN4 and integrin ITGB4. Also inhibits the activation of the EREG/EGFR signaling pathway through interaction with AQP2. The chain is Micropeptide inhibiting actin cytoskeleton from Homo sapiens (Human).